Here is a 188-residue protein sequence, read N- to C-terminus: HTH-type transcriptional regulator Mb3439c (188 aa).

The HTH tetR-type domain occupies 17-77; that stretch reads EEVAAAILQA…AVLDHLGTKL (61 aa). Residues 40-59 constitute a DNA-binding region (H-T-H motif); it reads SIRDIAARSKVNHGLVFRHF.

Negatively regulates the expression of sulfate ester dioxygenase Mb3440 and its own expression. In Mycobacterium bovis (strain ATCC BAA-935 / AF2122/97), this protein is HTH-type transcriptional regulator Mb3439c.